The primary structure comprises 330 residues: Putative aminohydrolase AF_1775 (330 aa).

Zn(2+) is bound by residues His-54, His-56, His-181, and Asp-253.

The protein belongs to the metallo-dependent hydrolases superfamily. ATZ/TRZ family.

The chain is Putative aminohydrolase AF_1775 from Archaeoglobus fulgidus (strain ATCC 49558 / DSM 4304 / JCM 9628 / NBRC 100126 / VC-16).